A 131-amino-acid chain; its full sequence is Fumarate reductase subunit C (131 aa).

3 consecutive transmembrane segments (helical) span residues 30–50 (EGTA…LFAL), 57–77 (WMGF…LITL), and 109–129 (IIKG…YVAL).

The protein belongs to the FrdC family. In terms of assembly, part of an enzyme complex containing four subunits: a flavoprotein (FrdA), an iron-sulfur protein (FrdB), and two hydrophobic anchor proteins (FrdC and FrdD).

The protein localises to the cell inner membrane. Its function is as follows. Two distinct, membrane-bound, FAD-containing enzymes are responsible for the catalysis of fumarate and succinate interconversion; fumarate reductase is used in anaerobic growth, and succinate dehydrogenase is used in aerobic growth. Anchors the catalytic components of the fumarate reductase complex to the cell inner membrane, binds quinones. The sequence is that of Fumarate reductase subunit C from Salmonella dublin (strain CT_02021853).